The following is a 374-amino-acid chain: Serpin B8 (374 aa).

This sequence belongs to the serpin family. Ov-serpin subfamily.

Its subcellular location is the cytoplasm. In terms of biological role, has an important role in epithelial desmosome-mediated cell-cell adhesion. The sequence is that of Serpin B8 (SERPINB8) from Bos taurus (Bovine).